Reading from the N-terminus, the 626-residue chain is Elongation factor 4 (626 aa).

A tr-type G domain is found at 14–195; that stretch reads SLIRNFCIIA…RIVVDVPAPT (182 aa). GTP-binding positions include 26–31 and 142–145; these read DHGKST and NKID. A disordered region spans residues 603 to 626; sequence LSTGEGGNDRDTKDKIRAAQKSEG. Positions 609 to 626 are enriched in basic and acidic residues; sequence GNDRDTKDKIRAAQKSEG.

Belongs to the TRAFAC class translation factor GTPase superfamily. Classic translation factor GTPase family. LepA subfamily.

The protein resides in the cell membrane. It catalyses the reaction GTP + H2O = GDP + phosphate + H(+). In terms of biological role, required for accurate and efficient protein synthesis under certain stress conditions. May act as a fidelity factor of the translation reaction, by catalyzing a one-codon backward translocation of tRNAs on improperly translocated ribosomes. Back-translocation proceeds from a post-translocation (POST) complex to a pre-translocation (PRE) complex, thus giving elongation factor G a second chance to translocate the tRNAs correctly. Binds to ribosomes in a GTP-dependent manner. In Bifidobacterium animalis subsp. lactis (strain AD011), this protein is Elongation factor 4.